A 670-amino-acid chain; its full sequence is WD repeat-containing protein 48 homolog (670 aa).

WD repeat units follow at residues arginine 13 to proline 52, histidine 59 to threonine 98, threonine 101 to alanine 140, glycine 152 to lysine 191, glycine 194 to threonine 233, valine 236 to leucine 275, and glutamate 278 to asparagine 317. The interval serine 321–serine 348 is disordered. Over residues threonine 338–serine 348 the composition is skewed to low complexity. Residues lysine 359–aspartate 398 form a WD 8 repeat. Gly residues predominate over residues glycine 613–asparagine 625. Residues glycine 613–proline 645 are disordered. The span at serine 626–serine 635 shows a compositional bias: low complexity.

It belongs to the WD repeat WDR48 family. As to quaternary structure, catalytic component of the Usp12-46 deubiquitylase complex consisting of Usp12-46, Wdr20 and Uaf1; regulatory subunit that, together wtih Wdr20, stabilizes Usp12-46. The Usp12-46 deubiquitylase complex associates with arr/arrow; the interaction leads to deubiquitination and stabilization of arr/arrow.

In terms of biological role, regulatory component of the Usp12-46 deubiquitylase complex. activates deubiquitination by increasing the catalytic turnover without increasing the affinity of deubiquitinating enzymes for the substrate. The complex deubiquitylates the wg/wingless-signaling receptor arr/arrow, which stabilizes the receptor and increases its concentration at the cell surface; this enhances the sensitivity of cells to wg/wingless-signal stimulation. This increases the amplitude and spatial range of the signaling response to the wg/wingless morphogen gradient, facilitating the precise concentration-dependent regulation of its target genes. Together with Wdr20 and Usp12-46 required for wg/wingless-mediated signaling in the wing imaginal disc and for wg/wingless-dependent regulation of intestinal stem cell proliferation. This chain is WD repeat-containing protein 48 homolog, found in Culex quinquefasciatus (Southern house mosquito).